The primary structure comprises 334 residues: Heme A synthase (334 aa).

The next 5 helical transmembrane spans lie at 6 to 26, 93 to 113, 119 to 139, 154 to 174, and 189 to 209; these read ITRWLFISCIMVILMIIIGGI, GRITTLIYIVPLICFYFQGVI, LPYIIALLLFCIQGFMGWYMV, LAFHLIIAVIIYHILFYQLIK, and LIFSCISITVIYIQIFLGALV. Residue His-253 participates in heme binding. Transmembrane regions (helical) follow at residues 255-275, 282-302, and 305-325; these read LGGFSVFAVNAILVICLFKVK, IAYFLIIVLLIQIATGIITIV, and VPIIIASIHQFVAIILLSIII. Heme is bound at residue His-313.

The protein belongs to the COX15/CtaA family. Type 2 subfamily. In terms of assembly, interacts with CtaB. The cofactor is heme b.

Its subcellular location is the cell membrane. It catalyses the reaction Fe(II)-heme o + 2 A + H2O = Fe(II)-heme a + 2 AH2. The protein operates within porphyrin-containing compound metabolism; heme A biosynthesis; heme A from heme O: step 1/1. Functionally, catalyzes the conversion of heme O to heme A by two successive hydroxylations of the methyl group at C8. The first hydroxylation forms heme I, the second hydroxylation results in an unstable dihydroxymethyl group, which spontaneously dehydrates, resulting in the formyl group of heme A. The protein is Heme A synthase of Rickettsia prowazekii (strain Madrid E).